Here is a 96-residue protein sequence, read N- to C-terminus: Glutamyl-tRNA(Gln) amidotransferase subunit C (96 aa).

The protein belongs to the GatC family. Heterotrimer of A, B and C subunits.

The catalysed reaction is L-glutamyl-tRNA(Gln) + L-glutamine + ATP + H2O = L-glutaminyl-tRNA(Gln) + L-glutamate + ADP + phosphate + H(+). It carries out the reaction L-aspartyl-tRNA(Asn) + L-glutamine + ATP + H2O = L-asparaginyl-tRNA(Asn) + L-glutamate + ADP + phosphate + 2 H(+). In terms of biological role, allows the formation of correctly charged Asn-tRNA(Asn) or Gln-tRNA(Gln) through the transamidation of misacylated Asp-tRNA(Asn) or Glu-tRNA(Gln) in organisms which lack either or both of asparaginyl-tRNA or glutaminyl-tRNA synthetases. The reaction takes place in the presence of glutamine and ATP through an activated phospho-Asp-tRNA(Asn) or phospho-Glu-tRNA(Gln). In Nostoc sp. (strain PCC 7120 / SAG 25.82 / UTEX 2576), this protein is Glutamyl-tRNA(Gln) amidotransferase subunit C.